The primary structure comprises 147 residues: Myoglobin (147 aa).

The Globin domain maps to 2–141; it reads ADFDMVLKCW…IIADMEADYK (140 aa). His60 is a binding site for nitrite. O2 is bound at residue His60. A heme b-binding site is contributed by His89.

This sequence belongs to the globin family. Monomeric.

It localises to the cytoplasm. Its subcellular location is the sarcoplasm. It catalyses the reaction Fe(III)-heme b-[protein] + nitric oxide + H2O = Fe(II)-heme b-[protein] + nitrite + 2 H(+). It carries out the reaction H2O2 + AH2 = A + 2 H2O. Its function is as follows. Monomeric heme protein which primary function is to store oxygen and facilitate its diffusion within muscle tissues. Reversibly binds oxygen through a pentacoordinated heme iron and enables its timely and efficient release as needed during periods of heightened demand. Depending on the oxidative conditions of tissues and cells, and in addition to its ability to bind oxygen, it also has a nitrite reductase activity whereby it regulates the production of bioactive nitric oxide. Under stress conditions, like hypoxia and anoxia, it also protects cells against reactive oxygen species thanks to its pseudoperoxidase activity. This chain is Myoglobin (mb), found in Pseudochaenichthys georgianus (South Georgia icefish).